The following is a 360-amino-acid chain: Phenylalanine--tRNA ligase alpha subunit (360 aa).

Glu-260 is a Mg(2+) binding site.

This sequence belongs to the class-II aminoacyl-tRNA synthetase family. Phe-tRNA synthetase alpha subunit type 1 subfamily. Tetramer of two alpha and two beta subunits. Mg(2+) serves as cofactor.

The protein resides in the cytoplasm. The enzyme catalyses tRNA(Phe) + L-phenylalanine + ATP = L-phenylalanyl-tRNA(Phe) + AMP + diphosphate + H(+). This chain is Phenylalanine--tRNA ligase alpha subunit, found in Paracoccus denitrificans (strain Pd 1222).